The primary structure comprises 329 residues: Probable CTD kinase subunit alpha homolog (329 aa).

The Protein kinase domain maps to 22 to 297; sequence YEKIRIIGEG…VEQVVGSKYF (276 aa). ATP is bound by residues 28–36 and K49; that span reads IGEGTFGQV. The active-site Proton acceptor is D139.

Belongs to the protein kinase superfamily. CMGC Ser/Thr protein kinase family. CDC2/CDKX subfamily. Component of the CTDK-I complex.

The protein localises to the nucleus. Its subcellular location is the nucleolus. The catalysed reaction is [DNA-directed RNA polymerase] + ATP = phospho-[DNA-directed RNA polymerase] + ADP + H(+). Functionally, catalytic subunit of the CTDK-I complex, which hyperphosphorylates the C-terminal heptapeptide repeat domain (CTD) of the largest RNA polymerase II subunit. Involved in RNA polymerase II transcriptional elongation and pre-mRNA 3'-end processing. The chain is Probable CTD kinase subunit alpha homolog (CTK1) from Encephalitozoon cuniculi (strain GB-M1) (Microsporidian parasite).